A 177-amino-acid chain; its full sequence is Ribonuclease clavin (177 aa).

An N-terminal signal peptide occupies residues M1–R27. 2 disulfide bridges follow: C33–C175 and C103–C159. H77 is an active-site residue. Residues W98–N117 are disordered. The segment covering D102–N117 has biased composition (basic and acidic residues). E123 functions as the Proton acceptor in the catalytic mechanism. The active-site Proton donor is H164.

It belongs to the ribonuclease U2 family.

It localises to the secreted. Functionally, clavin has the same substrate specificity as alpha-sarcin. It is specific for purines in both single- and double-stranded RNA. Its toxic action on eukaryotic cells is the result of cleavage of a single phosphodiester bond in the 60S subunit of ribosomes. The chain is Ribonuclease clavin (cla) from Aspergillus clavatus (strain ATCC 1007 / CBS 513.65 / DSM 816 / NCTC 3887 / NRRL 1 / QM 1276 / 107).